Here is a 63-residue protein sequence, read N- to C-terminus: Large ribosomal subunit protein uL29 (63 aa).

The protein belongs to the universal ribosomal protein uL29 family.

This Flavobacterium johnsoniae (strain ATCC 17061 / DSM 2064 / JCM 8514 / BCRC 14874 / CCUG 350202 / NBRC 14942 / NCIMB 11054 / UW101) (Cytophaga johnsonae) protein is Large ribosomal subunit protein uL29.